Consider the following 124-residue polypeptide: UPF0342 protein DSY2926 (124 aa).

Belongs to the UPF0342 family.

The polypeptide is UPF0342 protein DSY2926 (Desulfitobacterium hafniense (strain Y51)).